Here is a 303-residue protein sequence, read N- to C-terminus: Putative band 7 family protein R614 (303 aa).

It belongs to the band 7/mec-2 family.

The polypeptide is Putative band 7 family protein R614 (Acanthamoeba polyphaga (Amoeba)).